The primary structure comprises 237 residues: Indole-3-glycerol phosphate synthase (237 aa).

Belongs to the TrpC family.

It carries out the reaction 1-(2-carboxyphenylamino)-1-deoxy-D-ribulose 5-phosphate + H(+) = (1S,2R)-1-C-(indol-3-yl)glycerol 3-phosphate + CO2 + H2O. It participates in amino-acid biosynthesis; L-tryptophan biosynthesis; L-tryptophan from chorismate: step 4/5. This is Indole-3-glycerol phosphate synthase from Thermoplasma volcanium (strain ATCC 51530 / DSM 4299 / JCM 9571 / NBRC 15438 / GSS1).